Consider the following 72-residue polypeptide: Threonine dehydratase operon activator protein (72 aa).

Its function is as follows. Probable trans-acting positive activator for the tdc operon. The polypeptide is Threonine dehydratase operon activator protein (tdcR) (Escherichia coli (strain K12)).